Consider the following 319-residue polypeptide: Curved DNA-binding protein (319 aa).

The 65-residue stretch at 5–69 (DYYKILGVEP…QKRAEFDEIR (65 aa)) folds into the J domain.

The protein localises to the cytoplasm. Its subcellular location is the nucleoid. In terms of biological role, DNA-binding protein that preferentially recognizes a curved DNA sequence. It is probably a functional analog of DnaJ; displays overlapping activities with DnaJ, but functions under different conditions, probably acting as a molecular chaperone in an adaptive response to environmental stresses other than heat shock. Lacks autonomous chaperone activity; binds native substrates and targets them for recognition by DnaK. Its activity is inhibited by the binding of CbpM. This Pseudomonas putida (strain ATCC 47054 / DSM 6125 / CFBP 8728 / NCIMB 11950 / KT2440) protein is Curved DNA-binding protein.